Here is a 457-residue protein sequence, read N- to C-terminus: Gamma-aminobutyric acid receptor subunit gamma-4 (457 aa).

A signal peptide spans 1 to 21; the sequence is MPAMVLLLCLALGPALRSARC. Over 22–256 the chain is Extracellular; it reads ESTEEYDYDY…VSFDLSRRMG (235 aa). N-linked (GlcNAc...) asparagine glycans are attached at residues Asn35 and Asn112. Cys173 and Cys187 are joined by a disulfide. An N-linked (GlcNAc...) asparagine glycan is attached at Asn230. 3 helical membrane passes run 257–279, 283–305, and 317–339; these read YFAI…SFWI, STPA…STIS, and AMDL…YATL. Over 340 to 433 the chain is Cytoplasmic; that stretch reads NYLVGNKKPL…VRIHISRLDS (94 aa). A helical membrane pass occupies residues 434–457; the sequence is YSRVFFPTAFLLFNIVYWIAYLYL.

It belongs to the ligand-gated ion channel (TC 1.A.9) family. Gamma-aminobutyric acid receptor (TC 1.A.9.5) subfamily. GABRG4 sub-subfamily. As to quaternary structure, generally pentameric. There are five types of GABA(A) receptor chains: alpha, beta, gamma, delta, and rho. As to expression, abundant in several brain regions, including the ectostriatum, nucleus rotundus and hyperstriatum ventrale.

It is found in the postsynaptic cell membrane. The protein resides in the cell membrane. In terms of biological role, GABA, the major inhibitory neurotransmitter in the vertebrate brain, mediates neuronal inhibition by binding to the GABA/benzodiazepine receptor and opening an integral chloride channel. This chain is Gamma-aminobutyric acid receptor subunit gamma-4 (GABRG4), found in Gallus gallus (Chicken).